A 339-amino-acid polypeptide reads, in one-letter code: Purple acid phosphatase 4 (339 aa).

The N-terminal stretch at 1 to 31 (MSSKFDIGSLSIVMTLLICFLLLSLAPKLEA) is a signal peptide. Aspartate 53 is a Fe cation binding site. The N-linked (GlcNAc...) asparagine glycan is linked to asparagine 61. Fe cation contacts are provided by aspartate 86 and tyrosine 89. Aspartate 86 serves as a coordination point for Zn(2+). 2 residues coordinate Zn(2+): asparagine 124 and histidine 218. Histidine 227 (proton donor) is an active-site residue. Histidine 253 contacts Zn(2+). 253–255 (HDH) is a binding site for substrate. Histidine 255 contacts Fe cation. An N-linked (GlcNAc...) asparagine glycan is attached at asparagine 284.

The protein belongs to the metallophosphoesterase superfamily. Purple acid phosphatase family. In terms of assembly, homodimer. It depends on Fe cation as a cofactor. Zn(2+) serves as cofactor. Expressed in roots, stems, leaves, flowers and siliques.

It is found in the secreted. The catalysed reaction is a phosphate monoester + H2O = an alcohol + phosphate. The polypeptide is Purple acid phosphatase 4 (PAP4) (Arabidopsis thaliana (Mouse-ear cress)).